The chain runs to 84 residues: Cell division topological specificity factor (84 aa).

This sequence belongs to the MinE family.

Functionally, prevents the cell division inhibition by proteins MinC and MinD at internal division sites while permitting inhibition at polar sites. This ensures cell division at the proper site by restricting the formation of a division septum at the midpoint of the long axis of the cell. The sequence is that of Cell division topological specificity factor from Burkholderia ambifaria (strain MC40-6).